Here is a 523-residue protein sequence, read N- to C-terminus: Cytoplasmic dynein 1 light intermediate chain 1 (523 aa).

The tract at residues 1-25 (MAAVGRVGSFGSSPPGLSSTYTGGP) is disordered. The segment covering 9 to 19 (SFGSSPPGLSS) has biased composition (low complexity). 74–81 (GEDGAGKT) serves as a coordination point for ATP. S207 is modified (phosphoserine). Residue T213 is modified to Phosphothreonine. Disordered regions lie at residues 387 to 434 (PPTA…DPNM) and 456 to 523 (TGSP…GEAS). Residues S398 and S405 each carry the phosphoserine modification. The residue at position 408 (T408) is a Phosphothreonine. 4 positions are modified to phosphoserine: S412, S419, S421, and S427. Residues 412–421 (SVSSNVASVS) are compositionally biased toward low complexity. A compositionally biased stretch (gly residues) spans 458–478 (SPGGPGVSGGSPAGGAGGGSS). A Phosphoserine modification is found at S487. Residues 493 to 503 (LDVHAELDRIT) are compositionally biased toward basic and acidic residues. Residues 506-523 (PVTVSPTTPTSPTEGEAS) are compositionally biased toward low complexity. S510 carries the phosphoserine modification. 3 positions are modified to phosphothreonine: T512, T513, and T515. Residue S516 is modified to Phosphoserine.

Belongs to the dynein light intermediate chain family. Homodimer. The cytoplasmic dynein 1 complex consists of two catalytic heavy chains (HCs) and a number of non-catalytic subunits presented by intermediate chains (ICs), light intermediate chains (LICs) and light chains (LCs); the composition seems to vary in respect to the IC, LIC and LC composition. The heavy chain homodimer serves as a scaffold for the probable homodimeric assembly of the respective non-catalytic subunits. The ICs and LICs bind directly to the HC dimer and the LCs assemble on the IC dimer. Self-associates. Interacts with DYNC1H1; DYNC1LI1 and DYNC1LI2 bind mutually exclusive to DYNC1H1. Interacts with PCNT. Forms a complex with RAB11FIP3 and RAB11A1; the interaction between DYNC1LI1 and RAB11FIP3 is direct and induces DYNC1LI1 localization onto endosomal membrane; the complex regulates endocytic trafficking. Interacts with RUFY3. As to quaternary structure, (Microbial infection) Interacts with human adenovirus 5 hexon protein; this interaction probably allows virus intracellular transport. Post-translationally, phosphorylated during mitosis but not in interphase.

The protein resides in the cytoplasm. It is found in the chromosome. The protein localises to the centromere. Its subcellular location is the kinetochore. It localises to the cytoskeleton. The protein resides in the spindle pole. It is found in the recycling endosome membrane. Its function is as follows. Acts as one of several non-catalytic accessory components of the cytoplasmic dynein 1 complex that are thought to be involved in linking dynein to cargos and to adapter proteins that regulate dynein function. Cytoplasmic dynein 1 acts as a motor for the intracellular retrograde motility of vesicles and organelles along microtubules. May play a role in binding dynein to membranous organelles or chromosomes. Probably involved in the microtubule-dependent transport of pericentrin. Is required for progress through the spindle assembly checkpoint. The phosphorylated form appears to be involved in the selective removal of MAD1L1 and MAD1L2 but not BUB1B from kinetochores. Forms a functional Rab11/RAB11FIP3/dynein complex onto endosomal membrane that regulates the movement of peripheral sorting endosomes (SE) along microtubule tracks toward the microtubule organizing center/centrosome, generating the endosomal recycling compartment (ERC). The polypeptide is Cytoplasmic dynein 1 light intermediate chain 1 (DYNC1LI1) (Homo sapiens (Human)).